The following is a 196-amino-acid chain: uncharacterized protein (196 aa).

Belongs to the NAD(P)H dehydrogenase (quinone) family.

This is an uncharacterized protein from Escherichia coli (strain K12).